The chain runs to 122 residues: Non-specific lipid-transfer protein (122 aa).

Positions 1–19 (MGVSRACFVVMVVVYMVVA) are cleaved as a signal peptide. Positions 20–29 (ATPNVKLAEA) are excised as a propeptide. Intrachain disulfides connect Cys-32–Cys-81, Cys-42–Cys-58, Cys-59–Cys-104, and Cys-79–Cys-118.

In terms of assembly, monomer.

In terms of biological role, plant non-specific lipid-transfer proteins transfer phospholipids as well as galactolipids across membranes. May play a role in wax or cutin deposition in the cell walls of expanding epidermal cells and certain secretory tissues. Binds saturated fatty acids, unsaturated fatty acids, lysolipids and, with highest efficiency, jasmonic acid. Has weak antimicrobial activity against fungi. Inhibits spore germination and hyphae elongation in A.niger VKM F-2259 and N.crassa VKM F-184. Has no antibacterial activity against A.tumefaciens A281, C.michiganensis VKM Ac-144 and P.syringae VKM B-1546. This chain is Non-specific lipid-transfer protein, found in Anethum graveolens (Dill).